Consider the following 308-residue polypeptide: Olfactory receptor 4N5 (308 aa).

Residues 1-25 (METQNLTVVTEFILLGLTQSQDAQL) lie on the Extracellular side of the membrane. The N-linked (GlcNAc...) asparagine glycan is linked to Asn5. The chain crosses the membrane as a helical span at residues 26 to 49 (LVFVLVLIFYLIILPGNFLIIFTI). The Cytoplasmic segment spans residues 50 to 57 (KSDPGLTA). The helical transmembrane segment at 58–79 (PLYFFLGNLALLDASYSFIVVP) threads the bilayer. At 80–100 (RMLVDFLSEKKVISYRSCITQ) the chain is on the extracellular side. The cysteines at positions 97 and 189 are disulfide-linked. Residues 101–120 (LFFLHFLGAGEMFLLVVMAF) traverse the membrane as a helical segment. The Cytoplasmic portion of the chain corresponds to 121–139 (DRYIAICRPLHYSTIMNPR). Residues 140–158 (ACYALSLVLWLGGFIHSIV) traverse the membrane as a helical segment. The Extracellular portion of the chain corresponds to 159 to 195 (QVALILHLPFCGPNQLDNFFCDVPQVIKLACTNTFVV). Residues 196-219 (ELLMVSNSGLLSLLCFLGLLASYA) traverse the membrane as a helical segment. At 220 to 235 (VILCRIREHSSEGKSK) the chain is on the cytoplasmic side. The helical transmembrane segment at 236–258 (AISTCTTHIIIIFLMFGPAIFIY) threads the bilayer. The Extracellular segment spans residues 259-269 (TCPFQAFPADK). Residues 270 to 289 (VVSLFHTVIFPLMNPVIYTL) traverse the membrane as a helical segment. Residues 290-308 (RNQEVKASMRKLLSQHMFC) lie on the Cytoplasmic side of the membrane.

It belongs to the G-protein coupled receptor 1 family.

It is found in the cell membrane. Functionally, odorant receptor. This chain is Olfactory receptor 4N5 (OR4N5), found in Homo sapiens (Human).